The following is a 206-amino-acid chain: Elongation factor Ts (206 aa).

Positions 81-84 are involved in Mg(2+) ion dislocation from EF-Tu; that stretch reads TDFV.

It belongs to the EF-Ts family.

The protein localises to the cytoplasm. In terms of biological role, associates with the EF-Tu.GDP complex and induces the exchange of GDP to GTP. It remains bound to the aminoacyl-tRNA.EF-Tu.GTP complex up to the GTP hydrolysis stage on the ribosome. This Maridesulfovibrio salexigens (strain ATCC 14822 / DSM 2638 / NCIMB 8403 / VKM B-1763) (Desulfovibrio salexigens) protein is Elongation factor Ts.